The primary structure comprises 808 residues: Bifunctional uridylyltransferase/uridylyl-removing enzyme (808 aa).

The interval 1–315 (MEAESPCAAS…ALVRRPKRRP (315 aa)) is uridylyltransferase. Positions 316-609 (LDEGVVEYAG…EISPRDGERI (294 aa)) are uridylyl-removing. The 115-residue stretch at 430-544 (VDRHVVETAV…LEVLHALSEA (115 aa)) folds into the HD domain. 2 ACT domains span residues 610 to 686 (DAVI…GMLQ) and 730 to 805 (ILEV…VDEP).

This sequence belongs to the GlnD family. The cofactor is Mg(2+).

It carries out the reaction [protein-PII]-L-tyrosine + UTP = [protein-PII]-uridylyl-L-tyrosine + diphosphate. The catalysed reaction is [protein-PII]-uridylyl-L-tyrosine + H2O = [protein-PII]-L-tyrosine + UMP + H(+). In terms of biological role, modifies, by uridylylation and deuridylylation, the PII regulatory protein (GlnB), in response to the nitrogen status of the cell that GlnD senses through the glutamine level. Under low glutamine levels, catalyzes the conversion of the PII protein and UTP to PII-UMP and PPi, while under higher glutamine levels, GlnD hydrolyzes PII-UMP to PII and UMP (deuridylylation). Thus, controls uridylylation state and activity of the PII protein, and plays an important role in the regulation of nitrogen assimilation and metabolism. The polypeptide is Bifunctional uridylyltransferase/uridylyl-removing enzyme (Mycobacterium tuberculosis (strain CDC 1551 / Oshkosh)).